Consider the following 313-residue polypeptide: Protoheme IX farnesyltransferase (313 aa).

Helical transmembrane passes span V32–H52, P53–L73, V120–I140, I153–G173, L180–F200, I226–F246, A248–V268, and L284–V304.

The protein belongs to the UbiA prenyltransferase family. Protoheme IX farnesyltransferase subfamily.

The protein resides in the cell inner membrane. The enzyme catalyses heme b + (2E,6E)-farnesyl diphosphate + H2O = Fe(II)-heme o + diphosphate. It participates in porphyrin-containing compound metabolism; heme O biosynthesis; heme O from protoheme: step 1/1. Functionally, converts heme B (protoheme IX) to heme O by substitution of the vinyl group on carbon 2 of heme B porphyrin ring with a hydroxyethyl farnesyl side group. This chain is Protoheme IX farnesyltransferase, found in Rhodopseudomonas palustris (strain BisB5).